The following is a 158-amino-acid chain: Small ribosomal subunit protein uS9 (158 aa).

It belongs to the universal ribosomal protein uS9 family.

This Nitrobacter hamburgensis (strain DSM 10229 / NCIMB 13809 / X14) protein is Small ribosomal subunit protein uS9.